We begin with the raw amino-acid sequence, 661 residues long: tRNA uridine 5-carboxymethylaminomethyl modification enzyme MnmG (661 aa).

Residue 13 to 18 coordinates FAD; it reads GGGHAG. 285-299 is a binding site for NAD(+); that stretch reads GPRYCPSVEDKINRF.

This sequence belongs to the MnmG family. In terms of assembly, homodimer. Heterotetramer of two MnmE and two MnmG subunits. The cofactor is FAD.

It localises to the cytoplasm. NAD-binding protein involved in the addition of a carboxymethylaminomethyl (cmnm) group at the wobble position (U34) of certain tRNAs, forming tRNA-cmnm(5)s(2)U34. The sequence is that of tRNA uridine 5-carboxymethylaminomethyl modification enzyme MnmG from Acidovorax sp. (strain JS42).